We begin with the raw amino-acid sequence, 89 residues long: Small ribosomal subunit protein uS15 (89 aa).

Belongs to the universal ribosomal protein uS15 family. In terms of assembly, part of the 30S ribosomal subunit. Forms a bridge to the 50S subunit in the 70S ribosome, contacting the 23S rRNA.

In terms of biological role, one of the primary rRNA binding proteins, it binds directly to 16S rRNA where it helps nucleate assembly of the platform of the 30S subunit by binding and bridging several RNA helices of the 16S rRNA. Functionally, forms an intersubunit bridge (bridge B4) with the 23S rRNA of the 50S subunit in the ribosome. This Acidiphilium cryptum (strain JF-5) protein is Small ribosomal subunit protein uS15.